The sequence spans 249 residues: MSNDSSECSQKLPKLKRILLKLSGESLSADQGFGINVESAQPIINQIKTLTNFGVELALVVGGGNILRGGRANFGNKIRRATADSMGMIATMINALALRDMLISEGVDAEVFSAKGVDGLLKVASAHEFNQELAKGRVLIFAGGTGNPFVTTDTTASLRAVEIGADALLKATTVNGVYDKDPNKYSDAKRFDKVTFSEVVSKELNVMDLGAFTQCRDFGIPIYVFDLTQPNALVDAVLDSKYGTWVTLD.

21–24 (KLSG) provides a ligand contact to ATP. Residue Gly63 participates in UMP binding. The ATP site is built by Gly64 and Arg68. Residues Asp84 and 145–152 (TGNPFVTT) contribute to the UMP site. Thr172, Tyr178, and Asp181 together coordinate ATP.

The protein belongs to the UMP kinase family. Homohexamer.

The protein localises to the cytoplasm. It catalyses the reaction UMP + ATP = UDP + ADP. It functions in the pathway pyrimidine metabolism; CTP biosynthesis via de novo pathway; UDP from UMP (UMPK route): step 1/1. With respect to regulation, inhibited by UTP. In terms of biological role, catalyzes the reversible phosphorylation of UMP to UDP. This Francisella tularensis subsp. tularensis (strain FSC 198) protein is Uridylate kinase.